The sequence spans 138 residues: Large ribosomal subunit protein bL17 (138 aa).

It belongs to the bacterial ribosomal protein bL17 family. As to quaternary structure, part of the 50S ribosomal subunit. Contacts protein L32.

This chain is Large ribosomal subunit protein bL17, found in Methylorubrum extorquens (strain PA1) (Methylobacterium extorquens).